The sequence spans 246 residues: Carboxylesterase (246 aa).

The active-site Nucleophile is Ser93. Residues Asp192 and His222 each act as charge relay system in the active site.

This sequence belongs to the lipase/esterase LIP3/BchO family. Homodimer.

It carries out the reaction a carboxylic ester + H2O = an alcohol + a carboxylate + H(+). Functionally, involved in the detoxification of xenobiotics. Shows maximal activity with C6 substrates, with gradually decreasing activity from C8 to C12 substrates. No activity for higher chain length substrates acids rather than long-chain ones. In Bacillus subtilis (strain 168), this protein is Carboxylesterase (est).